A 345-amino-acid chain; its full sequence is uncharacterized protein (345 aa).

Disordered regions lie at residues 1-24 and 296-345; these read MGLE…ENRK and MTAH…LNES. Residues 304–323 show a composition bias toward acidic residues; that stretch reads SDYDNDDDTDGIINETDYEL. Positions 324-345 are enriched in polar residues; that stretch reads DTSQSEFATLTTSSNKSILNES.

This is an uncharacterized protein from Schizosaccharomyces pombe (strain 972 / ATCC 24843) (Fission yeast).